Consider the following 646-residue polypeptide: Phosphomethylpyrimidine synthase (646 aa).

Residues Asn-235, Met-264, Tyr-293, His-329, 349–351 (SRG), 390–393 (DGLR), and Glu-429 contribute to the substrate site. Residue His-433 coordinates Zn(2+). Residue Tyr-456 coordinates substrate. A Zn(2+)-binding site is contributed by His-497. Residues Cys-577, Cys-580, and Cys-585 each contribute to the [4Fe-4S] cluster site.

This sequence belongs to the ThiC family. Homodimer. [4Fe-4S] cluster serves as cofactor.

The enzyme catalyses 5-amino-1-(5-phospho-beta-D-ribosyl)imidazole + S-adenosyl-L-methionine = 4-amino-2-methyl-5-(phosphooxymethyl)pyrimidine + CO + 5'-deoxyadenosine + formate + L-methionine + 3 H(+). The protein operates within cofactor biosynthesis; thiamine diphosphate biosynthesis. Catalyzes the synthesis of the hydroxymethylpyrimidine phosphate (HMP-P) moiety of thiamine from aminoimidazole ribotide (AIR) in a radical S-adenosyl-L-methionine (SAM)-dependent reaction. In Vibrio campbellii (strain ATCC BAA-1116), this protein is Phosphomethylpyrimidine synthase.